Reading from the N-terminus, the 89-residue chain is Cytochrome c6 (89 aa).

Residues C15, C18, H19, and M61 each coordinate heme c.

This sequence belongs to the cytochrome c family. PetJ subfamily. In terms of assembly, monomer. Binds 1 heme c group covalently per subunit.

Its subcellular location is the plastid. The protein localises to the chloroplast thylakoid lumen. Functionally, functions as an electron carrier between membrane-bound cytochrome b6-f and photosystem I in oxygenic photosynthesis. This is Cytochrome c6 (petJ) from Tetradesmus obliquus (Green alga).